The sequence spans 94 residues: Co-chaperonin GroES (94 aa).

It belongs to the GroES chaperonin family. In terms of assembly, heptamer of 7 subunits arranged in a ring. Interacts with the chaperonin GroEL.

It is found in the cytoplasm. Together with the chaperonin GroEL, plays an essential role in assisting protein folding. The GroEL-GroES system forms a nano-cage that allows encapsulation of the non-native substrate proteins and provides a physical environment optimized to promote and accelerate protein folding. GroES binds to the apical surface of the GroEL ring, thereby capping the opening of the GroEL channel. This Geobacillus sp. (strain WCH70) protein is Co-chaperonin GroES.